A 432-amino-acid polypeptide reads, in one-letter code: Adenylosuccinate synthetase (432 aa).

GTP contacts are provided by residues 13-19 (GDEGKGK) and 41-43 (GHT). Residue Asp14 is the Proton acceptor of the active site. Asp14 and Gly41 together coordinate Mg(2+). IMP is bound by residues 14-17 (DEGK), 39-42 (NAGH), Thr131, Arg145, Gln226, Thr241, and Arg305. The Proton donor role is filled by His42. Residue 301 to 307 (SVTGRAR) coordinates substrate. GTP contacts are provided by residues Arg307, 333–335 (KLD), and 416–418 (STG).

This sequence belongs to the adenylosuccinate synthetase family. Homodimer. It depends on Mg(2+) as a cofactor.

The protein resides in the cytoplasm. The enzyme catalyses IMP + L-aspartate + GTP = N(6)-(1,2-dicarboxyethyl)-AMP + GDP + phosphate + 2 H(+). It participates in purine metabolism; AMP biosynthesis via de novo pathway; AMP from IMP: step 1/2. Plays an important role in the de novo pathway of purine nucleotide biosynthesis. Catalyzes the first committed step in the biosynthesis of AMP from IMP. The protein is Adenylosuccinate synthetase of Neisseria meningitidis serogroup A / serotype 4A (strain DSM 15465 / Z2491).